The chain runs to 335 residues: Protein MET1, chloroplastic (335 aa).

Residues M1–P18 show a composition bias toward low complexity. 2 disordered regions span residues M1–L29 and S66–T88. A chloroplast-targeting transit peptide spans M1–K73. Residues R19–L29 show a composition bias toward polar residues. Over residues G78–T88 the composition is skewed to acidic residues. The region spanning Y97–S136 is the PDZ domain. TPR repeat units lie at residues R217–P250, S254–D287, and K289–I323.

As to quaternary structure, interacts directly with stromal loops of photosystem II (PSII) core components psbB (CP47) and psbC (CP43). Associates with PSII subcomplexes formed during the PSII repair cycle (e.g. PSII dimers, PSII monomers, CP43-less PSII monomerand PSII reaction centers). In terms of processing, phosphorylated rapidly (e.g. within 5 minutes) but transiently at threonine and serine residues after wounding. In terms of tissue distribution, expressed in leaves (at protein level). Mostly expressed in leaves, stems and siliques, and, to a lower extent, in flowers and senescent leaves, but not present in roots (at protein level).

The protein resides in the plastid. It localises to the chloroplast membrane. Its subcellular location is the chloroplast thylakoid membrane. Involved in photosystem II supercomplex formation and repair, probably acting as a psbB/psbC chaperone on the stromal side of the membrane. In Arabidopsis thaliana (Mouse-ear cress), this protein is Protein MET1, chloroplastic.